The primary structure comprises 284 residues: Tropomyosin alpha-1 chain (284 aa).

The tract at residues 1–40 (MDAIKKKMQMLKLDKENALDRAEQAEADKKGAEDKSKQLE) is disordered. Residues 1-284 (MDAIKKKMQM…DHALNDMTSI (284 aa)) are a coiled coil. Over residues 12–40 (KLDKENALDRAEQAEADKKGAEDKSKQLE) the composition is skewed to basic and acidic residues.

It belongs to the tropomyosin family. As to quaternary structure, homodimer. Heterodimer of an alpha (TPM1, TPM3 or TPM4) and a beta (TPM2) chain.

It localises to the cytoplasm. It is found in the cytoskeleton. Functionally, binds to actin filaments in muscle and non-muscle cells. Plays a central role, in association with the troponin complex, in the calcium dependent regulation of vertebrate striated muscle contraction. Smooth muscle contraction is regulated by interaction with caldesmon. In non-muscle cells is implicated in stabilizing cytoskeleton actin filaments. This Rana temporaria (European common frog) protein is Tropomyosin alpha-1 chain (tpm1).